The sequence spans 555 residues: Transmembrane protein 87A (555 aa).

An N-terminal signal peptide occupies residues Met-1–Pro-21. Residues Ser-22 to Pro-225 lie on the Lumenal side of the membrane. Disulfide bonds link Cys-74–Cys-128 and Cys-89–Cys-431. Asn-79, Asn-127, Asn-157, and Asn-160 each carry an N-linked (GlcNAc...) asparagine glycan. The helical transmembrane segment at Leu-226–Ala-246 threads the bilayer. The Cytoplasmic portion of the chain corresponds to Trp-247–Arg-257. Residues Ile-258–Ala-278 form a helical membrane-spanning segment. The Lumenal segment spans residues Glu-279–Arg-305. Residues Ser-306–Val-322 traverse the membrane as a helical segment. Residues Lys-323–Arg-325 are Cytoplasmic-facing. A helical membrane pass occupies residues Leu-326–Met-346. Topologically, residues Glu-347–Ser-361 are lumenal. A helical membrane pass occupies residues Leu-362 to Leu-382. At Thr-383–His-403 the chain is on the cytoplasmic side. Residues Phe-404–Met-424 traverse the membrane as a helical segment. Over Lys-425–Glu-437 the chain is Lumenal. The chain crosses the membrane as a helical span at residues Leu-438–Val-458. The Cytoplasmic segment spans residues Leu-459 to Glu-555. The disordered stretch occupies residues Pro-473 to Asp-516. A compositionally biased stretch (basic and acidic residues) spans Lys-484 to Lys-496. Residues Gln-502 to Asn-511 are compositionally biased toward polar residues. A Phosphoserine modification is found at Ser-540.

It belongs to the LU7TM family. TMEM87 subfamily. As to quaternary structure, may interact with STOML3; STOML3 potentiates the mechanosensitive ion channel activity associated with TMEM87A.

The protein localises to the cell membrane. It localises to the golgi apparatus membrane. Its subcellular location is the cell projection. The protein resides in the ruffle. Functionally, potential monoatomic ion channel gated by mechanical force, implicated in normal touch sensitivity through the generation of mechanically activated currents. However, a direct channel activity is debated and an alternative could be that it functions as a chaperone for an unidentified mechanosensitive ion channel. Could also be involved in cell mechanosensitivity regulating cell adhesion and migration. May also be involved in retrograde transport from endosomes to the trans-Golgi network (TGN). The polypeptide is Transmembrane protein 87A (Homo sapiens (Human)).